Consider the following 239-residue polypeptide: Large ribosomal subunit protein uL2 (239 aa).

Positions 200–239 (VNHPHGGKEHHIGRPSTVSRRAPPGRKVGHIAARRTGRRK) are disordered. Basic residues predominate over residues 222–239 (PPGRKVGHIAARRTGRRK).

This sequence belongs to the universal ribosomal protein uL2 family. As to quaternary structure, part of the 50S ribosomal subunit. Forms a bridge to the 30S subunit in the 70S ribosome.

Functionally, one of the primary rRNA binding proteins. Required for association of the 30S and 50S subunits to form the 70S ribosome, for tRNA binding and peptide bond formation. It has been suggested to have peptidyltransferase activity; this is somewhat controversial. Makes several contacts with the 16S rRNA in the 70S ribosome. In Thermococcus gammatolerans (strain DSM 15229 / JCM 11827 / EJ3), this protein is Large ribosomal subunit protein uL2.